Consider the following 240-residue polypeptide: Gas vesicle protein C (240 aa).

Residues 1–13 (MALKDKWQQDRIG) are compositionally biased toward basic and acidic residues. The interval 1–20 (MALKDKWQQDRIGRQQGVQE) is disordered. 5 consecutive repeats follow at residues 18–50 (VQER…RQGF), 51–83 (VTGV…LENF), 84–116 (IQQL…LSEF), 117–149 (REDL…LAIF), and 150–207 (RQTL…LQDY). Positions 18 to 207 (VQERQQQVQT…GVFRAELQDY (190 aa)) are 5 X 33 AA tandem repeats.

It belongs to the gas vesicle GvpC family.

The protein resides in the gas vesicle. In terms of biological role, confers stability, involved in shaping gas vesicles, hollow, gas filled proteinaceous nanostructures. During planktonic growth they allow positioning of the organism at a favorable depth for light or nutrient acquisition. In Planktothrix agardhii (Oscillatoria agardhii), this protein is Gas vesicle protein C.